A 133-amino-acid polypeptide reads, in one-letter code: Salmonella pathogenicity island 2 protein C (133 aa).

Interacts with the mammalian NIPSNAP3A and HOOK3 proteins in infected cells.

Its subcellular location is the secreted. The protein localises to the cytoplasm. Virulence protein that plays a central role in mammalian macrophage infection, by inhibiting phagosome-lysosome fusion and cellular trafficking, including trafficking of organelles that are devoid of Salmonella. May act by disrupting the function of the mammalian HOOK3 protein, a protein involved in the cellular traffic. Also required for actin ADP-ribosylase SpvB activity. This chain is Salmonella pathogenicity island 2 protein C (spiC), found in Salmonella typhimurium (strain 14028s / SGSC 2262).